Here is a 299-residue protein sequence, read N- to C-terminus: Urease accessory protein UreD (299 aa).

This sequence belongs to the UreD family. As to quaternary structure, ureD, UreF and UreG form a complex that acts as a GTP-hydrolysis-dependent molecular chaperone, activating the urease apoprotein by helping to assemble the nickel containing metallocenter of UreC. The UreE protein probably delivers the nickel.

The protein resides in the cytoplasm. Required for maturation of urease via the functional incorporation of the urease nickel metallocenter. In Haloarcula marismortui (strain ATCC 43049 / DSM 3752 / JCM 8966 / VKM B-1809) (Halobacterium marismortui), this protein is Urease accessory protein UreD.